The sequence spans 94 residues: MLKPLGDRVVIEVIETEEKTASGIVLPDTAKEKPQEGRVVAVGKGRVLDSGERVAPEVEVGDRIIFSKYAGTEVKYDGKEYLILRESDILAVIG.

This sequence belongs to the GroES chaperonin family. Heptamer of 7 subunits arranged in a ring. Interacts with the chaperonin GroEL.

Its subcellular location is the cytoplasm. Together with the chaperonin GroEL, plays an essential role in assisting protein folding. The GroEL-GroES system forms a nano-cage that allows encapsulation of the non-native substrate proteins and provides a physical environment optimized to promote and accelerate protein folding. GroES binds to the apical surface of the GroEL ring, thereby capping the opening of the GroEL channel. The sequence is that of Co-chaperonin GroES from Geobacillus stearothermophilus (Bacillus stearothermophilus).